A 313-amino-acid polypeptide reads, in one-letter code: Formimidoylglutamase (313 aa).

The Mn(2+) site is built by H130, D155, H157, D159, D241, and D243.

This sequence belongs to the arginase family. It depends on Mn(2+) as a cofactor.

The catalysed reaction is N-formimidoyl-L-glutamate + H2O = formamide + L-glutamate. The protein operates within amino-acid degradation; L-histidine degradation into L-glutamate; L-glutamate from N-formimidoyl-L-glutamate (hydrolase route): step 1/1. Functionally, catalyzes the conversion of N-formimidoyl-L-glutamate to L-glutamate and formamide. The chain is Formimidoylglutamase from Salmonella typhi.